The chain runs to 159 residues: Nucleotide-binding protein PSPPH_4093 (159 aa).

It belongs to the YajQ family.

Its function is as follows. Nucleotide-binding protein. The chain is Nucleotide-binding protein PSPPH_4093 from Pseudomonas savastanoi pv. phaseolicola (strain 1448A / Race 6) (Pseudomonas syringae pv. phaseolicola (strain 1448A / Race 6)).